The chain runs to 925 residues: Probable dipeptidyl-aminopeptidase B (925 aa).

The segment at 1-104 is disordered; the sequence is MTPYRDVPPV…RHAQKKGPGM (104 aa). At 1 to 110 the chain is on the cytoplasmic side; the sequence is MTPYRDVPPV…GPGMDRGMRR (110 aa). Residues 31–40 are compositionally biased toward low complexity; the sequence is ESGSSVSTTS. The span at 55–72 shows a compositional bias: basic and acidic residues; sequence LSEKQPRGDDNEDALKDE. Residues 111 to 131 traverse the membrane as a helical; Signal-anchor for type II membrane protein segment; sequence ALLIAAGLLVSAWVAGLFVYI. Topologically, residues 132–925 are vacuolar; the sequence is ATKSYKPASA…PKPNGKRRAA (794 aa). The N-linked (GlcNAc...) asparagine glycan is linked to N369. S773 (charge relay system) is an active-site residue. A glycan (N-linked (GlcNAc...) asparagine) is linked at N832. Active-site charge relay system residues include D850 and H883.

This sequence belongs to the peptidase S9B family.

The protein resides in the vacuole membrane. The catalysed reaction is Release of an N-terminal dipeptide, Xaa-Yaa-|-Zaa-, from a polypeptide, preferentially when Yaa is Pro, provided Zaa is neither Pro nor hydroxyproline.. Its function is as follows. Type IV dipeptidyl-peptidase which removes N-terminal dipeptides sequentially from polypeptides having unsubstituted N-termini provided that the penultimate residue is proline. The polypeptide is Probable dipeptidyl-aminopeptidase B (DAPB) (Chaetomium globosum (strain ATCC 6205 / CBS 148.51 / DSM 1962 / NBRC 6347 / NRRL 1970) (Soil fungus)).